The chain runs to 423 residues: UPF0229 protein PSEEN0423 (423 aa).

Residues 85 to 107 (GEHIARPQGGGGGGGRGKAGNSG) are disordered. Gly residues predominate over residues 92 to 107 (QGGGGGGGRGKAGNSG).

Belongs to the UPF0229 family.

The polypeptide is UPF0229 protein PSEEN0423 (Pseudomonas entomophila (strain L48)).